Reading from the N-terminus, the 192-residue chain is ATP synthase subunit b (192 aa).

A helical membrane pass occupies residues 7-27; sequence LLLVLGVMLLATGVALAAGGE.

Belongs to the ATPase B chain family. In terms of assembly, F-type ATPases have 2 components, F(1) - the catalytic core - and F(0) - the membrane proton channel. F(1) has five subunits: alpha(3), beta(3), gamma(1), delta(1), epsilon(1). F(0) has three main subunits: a(1), b(2) and c(10-14). The alpha and beta chains form an alternating ring which encloses part of the gamma chain. F(1) is attached to F(0) by a central stalk formed by the gamma and epsilon chains, while a peripheral stalk is formed by the delta and b chains.

The protein localises to the cell inner membrane. In terms of biological role, f(1)F(0) ATP synthase produces ATP from ADP in the presence of a proton or sodium gradient. F-type ATPases consist of two structural domains, F(1) containing the extramembraneous catalytic core and F(0) containing the membrane proton channel, linked together by a central stalk and a peripheral stalk. During catalysis, ATP synthesis in the catalytic domain of F(1) is coupled via a rotary mechanism of the central stalk subunits to proton translocation. Component of the F(0) channel, it forms part of the peripheral stalk, linking F(1) to F(0). This chain is ATP synthase subunit b, found in Oleidesulfovibrio alaskensis (strain ATCC BAA-1058 / DSM 17464 / G20) (Desulfovibrio alaskensis).